Reading from the N-terminus, the 245-residue chain is Complement C1q subcomponent subunit C (245 aa).

The N-terminal stretch at Met1 to Ala28 is a signal peptide. The Collagen-like domain occupies Gly31 to Gly112. A 4-hydroxyproline mark is found at Pro36, Pro39, Pro42, Pro45, Pro54, and Pro63. A disordered region spans residues Pro45 to Arg113. The segment covering Pro54–Pro71 has biased composition (low complexity). Position 75 is a 5-hydroxylysine (Lys75). The O-linked (Gal...) hydroxylysine glycan is linked to Lys75. A 4-hydroxyproline mark is found at Pro81, Pro93, Pro96, Pro99, and Pro105. The span at Met90–Pro99 shows a compositional bias: pro residues. Positions Lys115–Asp245 constitute a C1q domain. Cys179 and Cys193 are joined by a disulfide.

As to quaternary structure, core component of the complement C1 complex, a calcium-dependent complex composed of 1 molecule of the C1Q subcomplex, 2 molecules of C1R and 2 molecules of C1S. The C1Q subcomplex is composed 18 subunits: 3 chains of C1QA, C1QB, and C1QC trimerize to form 6 collagen-like triple helices connected to six globular ligand-recognition modules (C1q domain). In terms of processing, O-linked glycans consist of Glc-Gal disaccharides bound to the oxygen atom of post-translationally added hydroxyl groups.

It is found in the secreted. Its subcellular location is the cell surface. With respect to regulation, the C1Q subcomplex is inhibited by sulfated molecules, such as triterpenoid sulfates, heparan sulfate, or chondroitin sulfates. Core component of the complement C1 complex, a multiprotein complex that initiates the classical pathway of the complement system, a cascade of proteins that leads to phagocytosis and breakdown of pathogens and signaling that strengthens the adaptive immune system. The classical complement pathway is initiated by the C1Q subcomplex of the C1 complex, which specifically binds IgG or IgM immunoglobulins complexed with antigens, forming antigen-antibody complexes on the surface of pathogens: C1QA, together with C1QB and C1QC, specifically recognizes and binds the Fc regions of IgG or IgM via its C1q domain. Immunoglobulin-binding activates the proenzyme C1R, which cleaves C1S, initiating the proteolytic cascade of the complement system. The C1Q subcomplex is activated by a hexamer of IgG complexed with antigens, while it is activated by a pentameric IgM. The C1Q subcomplex also recognizes and binds phosphatidylserine exposed on the surface of cells undergoing programmed cell death, possibly promoting activation of the complement system. The polypeptide is Complement C1q subcomponent subunit C (Homo sapiens (Human)).